We begin with the raw amino-acid sequence, 300 residues long: Protease HtpX homolog (300 aa).

The next 2 membrane-spanning stretches (helical) occupy residues 7–24 and 29–46; these read GILM…GALI and GAII…FTFW. Zn(2+) is bound at residue His-130. Glu-131 is an active-site residue. His-134 provides a ligand contact to Zn(2+). 2 helical membrane-spanning segments follow: residues 145-165 and 174-194; these read VTAT…FFGG and PMGL…AGLV. Glu-203 serves as a coordination point for Zn(2+).

Belongs to the peptidase M48B family. It depends on Zn(2+) as a cofactor.

The protein localises to the cell inner membrane. The protein is Protease HtpX homolog of Cereibacter sphaeroides (strain ATCC 17029 / ATH 2.4.9) (Rhodobacter sphaeroides).